Reading from the N-terminus, the 215-residue chain is tRNA (guanine-N(7)-)-methyltransferase (215 aa).

Positions 44, 69, 96, and 118 each coordinate S-adenosyl-L-methionine. The active site involves D118. Substrate contacts are provided by residues K122, D154, and T192–E195.

This sequence belongs to the class I-like SAM-binding methyltransferase superfamily. TrmB family.

It catalyses the reaction guanosine(46) in tRNA + S-adenosyl-L-methionine = N(7)-methylguanosine(46) in tRNA + S-adenosyl-L-homocysteine. It functions in the pathway tRNA modification; N(7)-methylguanine-tRNA biosynthesis. Catalyzes the formation of N(7)-methylguanine at position 46 (m7G46) in tRNA. This is tRNA (guanine-N(7)-)-methyltransferase from Levilactobacillus brevis (strain ATCC 367 / BCRC 12310 / CIP 105137 / JCM 1170 / LMG 11437 / NCIMB 947 / NCTC 947) (Lactobacillus brevis).